The following is a 292-amino-acid chain: Putative xanthine dehydrogenase FAD-binding subunit XdhB (292 aa).

The FAD-binding PCMH-type domain maps to 1–176 (MFDFASYHRA…VAFHFPPQPK (176 aa)). FAD-binding positions include 27-34 (KLLAGGTD), 109-113 (ATYGG), Ile165, and Phe184.

Heterotrimer of XdhA, XdhB and XdhC. It depends on FAD as a cofactor.

It catalyses the reaction xanthine + NAD(+) + H2O = urate + NADH + H(+). The catalysed reaction is hypoxanthine + NAD(+) + H2O = xanthine + NADH + H(+). It participates in purine metabolism; hypoxanthine degradation; urate from hypoxanthine: step 1/2. Its pathway is purine metabolism; hypoxanthine degradation; urate from hypoxanthine: step 2/2. In terms of biological role, presumed to be a dehydrogenase, but possibly an oxidase. Participates in limited purine salvage (requires aspartate) but does not support aerobic growth on purines as the sole carbon source (purine catabolism). This is Putative xanthine dehydrogenase FAD-binding subunit XdhB (xdhB) from Escherichia coli (strain K12).